We begin with the raw amino-acid sequence, 170 residues long: Putative phosphoesterase OB1230 (170 aa).

The active-site Proton donor is His-34. 2 consecutive short sequence motifs (HXTX) follow at residues 34 to 37 (HLTL) and 115 to 118 (HITI). The active-site Proton acceptor is His-115.

It belongs to the 2H phosphoesterase superfamily. YjcG family.

This chain is Putative phosphoesterase OB1230, found in Oceanobacillus iheyensis (strain DSM 14371 / CIP 107618 / JCM 11309 / KCTC 3954 / HTE831).